We begin with the raw amino-acid sequence, 926 residues long: DNA mismatch repair protein MutS (926 aa).

The disordered stretch occupies residues 1-60 (MAASQNPIQGSLFGGNEESDLNKAEKLKGSERSNVNLSHQQLKEDASLRPRIKQTPKNPN). Over residues 20–31 (DLNKAEKLKGSE) the composition is skewed to basic and acidic residues. 726–733 (GPNASGKS) contributes to the ATP binding site.

Belongs to the DNA mismatch repair MutS family.

Its function is as follows. This protein is involved in the repair of mismatches in DNA. It is possible that it carries out the mismatch recognition step. This protein has a weak ATPase activity. This Prochlorococcus marinus (strain NATL2A) protein is DNA mismatch repair protein MutS.